The chain runs to 225 residues: MWLLLSPTRLEAPFLEGEPFAFLAWRGLKGTGFVYLETGIGKVNAAMALAAYAARNPVEKALLFGLAGAYPGGPSLGEAVLVEEEVEADLGLKEGLAPLGFPALALGERRYFNRFPLDPGLTGELARGLGLKVAVGLTRDLVSETPEEALALARRWGASLENMEGAAFARACLALGVRGAELRALSNPAGVRDKAHWRTKEALSALARAVRRLLAEEGGARRPPG.

It belongs to the PNP/UDP phosphorylase family. Futalosine hydrolase subfamily. As to quaternary structure, homotetramer.

The catalysed reaction is futalosine + H2O = dehypoxanthine futalosine + hypoxanthine. The protein operates within quinol/quinone metabolism; menaquinone biosynthesis. With respect to regulation, no enhancing of inhibitory effects are observed with divalent metal ions. Slightly inhibited by hypoxanthine. In terms of biological role, catalyzes the hydrolysis of futalosine (FL) to dehypoxanthine futalosine (DHFL) and hypoxanthine, a step in the biosynthesis of menaquinone (MK, vitamin K2). Is highly specific to futalosine since it does not accept aminodeoxyfutalosine (AFL), or any structurally related nucleotides and nucleosides as substrate. The polypeptide is Futalosine hydrolase (Thermus thermophilus (strain ATCC 27634 / DSM 579 / HB8)).